The primary structure comprises 79 residues: RNA-binding protein Hfq (79 aa).

Residues 10-70 enclose the Sm domain; it reads DVFLNTVRKQ…ISTIMPGQPV (61 aa).

Belongs to the Hfq family. As to quaternary structure, homohexamer.

In terms of biological role, RNA chaperone that binds small regulatory RNA (sRNAs) and mRNAs to facilitate mRNA translational regulation in response to envelope stress, environmental stress and changes in metabolite concentrations. Also binds with high specificity to tRNAs. This Bartonella quintana (strain Toulouse) (Rochalimaea quintana) protein is RNA-binding protein Hfq.